The following is a 361-amino-acid chain: MLLWLTEILSQYFSSLTVFQYLTLRAILGILTALLISLVIGPVMIRKLSQYQIGQAVRDDGPQTHLSKAGTPTMGGALILVAIAISTLLWADLTNRYVWVVLLVTLLFGAIGWVDDYRKVVERNPRGLPARWKYFWQSVIGATAAIVLYVTASMPQETSLYLPFLKNVSLTLGPVLFILLTYFVIVGSSNAVNLTDGLDGLAIMPTVMVAGALAIFAYLSGHAQFANYLLIPHLPGTGELIIFCGALVGAGLGFLWFNTYPAQVFMGDVGALALGAALGTVAVIVRQEIVLFIMGGVFVMETISVILQVASFRLTGRRIFRMAPLHHHFELKGWPEPRVIVRFWVVTVVLVLIGLASLKIR.

10 helical membrane-spanning segments follow: residues 26–46, 73–93, 97–117, 134–154, 168–188, 200–220, 237–257, 264–284, 289–309, and 340–360; these read AILG…VMIR, TMGG…WADL, YVWV…VDDY, YFWQ…TASM, VSLT…IVGS, GLAI…AYLS, TGEL…FLWF, VFMG…VAVI, IVLF…ILQV, and IVRF…SLKI.

This sequence belongs to the glycosyltransferase 4 family. MraY subfamily. Mg(2+) serves as cofactor.

It is found in the cell inner membrane. The catalysed reaction is UDP-N-acetyl-alpha-D-muramoyl-L-alanyl-gamma-D-glutamyl-meso-2,6-diaminopimeloyl-D-alanyl-D-alanine + di-trans,octa-cis-undecaprenyl phosphate = di-trans,octa-cis-undecaprenyl diphospho-N-acetyl-alpha-D-muramoyl-L-alanyl-D-glutamyl-meso-2,6-diaminopimeloyl-D-alanyl-D-alanine + UMP. It functions in the pathway cell wall biogenesis; peptidoglycan biosynthesis. In terms of biological role, catalyzes the initial step of the lipid cycle reactions in the biosynthesis of the cell wall peptidoglycan: transfers peptidoglycan precursor phospho-MurNAc-pentapeptide from UDP-MurNAc-pentapeptide onto the lipid carrier undecaprenyl phosphate, yielding undecaprenyl-pyrophosphoryl-MurNAc-pentapeptide, known as lipid I. In Marinobacter nauticus (strain ATCC 700491 / DSM 11845 / VT8) (Marinobacter aquaeolei), this protein is Phospho-N-acetylmuramoyl-pentapeptide-transferase.